The chain runs to 140 residues: Putative nickel-responsive regulator 3 (140 aa).

Ni(2+) is bound by residues H81, H92, H94, and C100.

This sequence belongs to the transcriptional regulatory CopG/NikR family. The cofactor is Ni(2+).

In terms of biological role, transcriptional regulator. This is Putative nickel-responsive regulator 3 from Methanosarcina acetivorans (strain ATCC 35395 / DSM 2834 / JCM 12185 / C2A).